A 774-amino-acid chain; its full sequence is Neprilysin-2 (774 aa).

Residues 1–20 lie on the Cytoplasmic side of the membrane; sequence MQTVIQNPNWWRRRNKLEKS. The chain crosses the membrane as a helical; Signal-anchor for type II membrane protein span at residues 21–41; sequence LLVSLGIMFVVLATGFGLWIG. Residues 42-774 are Extracellular-facing; the sequence is KVLRTSPPSN…MNPVQKCEVW (733 aa). The disordered stretch occupies residues 50–79; it reads SNPQATALHGDSTTINQVPTGTASKGKSGD. Positions 60–74 are enriched in polar residues; that stretch reads DSTTINQVPTGTASK. The Peptidase M13 domain maps to 83-774; that stretch reads VCLTQECIHT…MNPVQKCEVW (692 aa). 5 cysteine pairs are disulfide-bonded: Cys84-Cys89, Cys107-Cys759, Cys115-Cys719, Cys171-Cys424, and Cys646-Cys771. Asn173, Asn239, Asn264, Asn305, Asn315, Asn358, and Asn554 each carry an N-linked (GlcNAc...) asparagine glycan. A Zn(2+)-binding site is contributed by His609. Glu610 is a catalytic residue. His613 is a binding site for Zn(2+). Asn653 carries an N-linked (GlcNAc...) asparagine glycan. Glu671 is a Zn(2+) binding site. The Proton donor role is filled by Asp675.

This sequence belongs to the peptidase M13 family. Zn(2+) serves as cofactor. In terms of processing, N-glycosylated. The soluble form is probably produced by proteolytic cleavage. As to expression, detected in the stellate cells in the main segment and the bar-shaped cells in the initial segment of male and female Malpighian tubules (at protein level). Expressed in the spermatheca (at protein level). Expressed in the somatic cyst cells of the testes, with increased expression at the tail end of elongating cysts. Expressed in the ovaries with strong expression in the posterior polar cells and in border cells of stage 8, 9, and 10 follicles. In adults and third-instar larvae, expressed in the brain, ventral ganglion, and stellate cells. Also expressed in the foregut and the imaginal disks (eye, antennal and leg) of third-instar larvae. In stage 17 embryos, expressed in the tracheal system, foregut, hindgut and epidermis. Also expressed in the stellate cell progenitors of the caudal visceral mesoderm in embryos.

The protein localises to the cell membrane. It is found in the secreted. The catalysed reaction is Preferential cleavage of polypeptides between hydrophobic residues, particularly with Phe or Tyr at P1'.. In terms of biological role, metalloendoprotease which cleaves peptides such as tachykinin peptide TK-2 at the amino side of hydrophobic residues. Functions in female fertility, embryogenesis and memory formation. Required in females for normal patterns of egg laying, probably due to its function in sperm retention and preventing sperm displacement by rival ejaculates. Also required for normal patterns of hatching due to its important role in early embryonic development. Required in the dorsal paired medial neurons for the proper formation of middle-term memory. Also required in the mushroom body neurons where it functions redundantly with neprilysins Nep3 and Nep4 in normal long-term memory formation. The sequence is that of Neprilysin-2 from Drosophila melanogaster (Fruit fly).